The following is a 359-amino-acid chain: uncharacterized protein (359 aa).

3 disordered regions span residues 90 to 117 (QESP…PSRK), 132 to 161 (IKKE…GMTS), and 235 to 359 (TSME…THRR). Positions 151–161 (TPGSCSSGMTS) are enriched in polar residues. Over residues 245-259 (KPPTVKSPPTVKLPP) the composition is skewed to low complexity. A compositionally biased stretch (basic and acidic residues) spans 286-299 (EENKEVPKEAEHKP).

This is an uncharacterized protein from Homo sapiens (Human).